Consider the following 340-residue polypeptide: Phosphoribosylformylglycinamidine cyclo-ligase (340 aa).

It belongs to the AIR synthase family.

It is found in the cytoplasm. It catalyses the reaction 2-formamido-N(1)-(5-O-phospho-beta-D-ribosyl)acetamidine + ATP = 5-amino-1-(5-phospho-beta-D-ribosyl)imidazole + ADP + phosphate + H(+). It functions in the pathway purine metabolism; IMP biosynthesis via de novo pathway; 5-amino-1-(5-phospho-D-ribosyl)imidazole from N(2)-formyl-N(1)-(5-phospho-D-ribosyl)glycinamide: step 2/2. The sequence is that of Phosphoribosylformylglycinamidine cyclo-ligase from Streptococcus pneumoniae serotype 4 (strain ATCC BAA-334 / TIGR4).